A 497-amino-acid polypeptide reads, in one-letter code: uncharacterized protein (497 aa).

Residues 1 to 16 show a composition bias toward polar residues; it reads MSTTTETVTWSQYKPQ. The interval 1–29 is disordered; that stretch reads MSTTTETVTWSQYKPQETQRRLSRSSTIT. The residue at position 64 (serine 64) is a Phosphoserine. Transmembrane regions (helical) follow at residues 86 to 106, 120 to 140, 155 to 175, 180 to 200, 222 to 242, and 258 to 278; these read IALV…ALPI, FSGL…YPML, FRPL…YSLA, WLYL…MFLY, LNIL…GILA, and AGSW…SIFF. At serine 295 the chain carries Phosphoserine. Transmembrane regions (helical) follow at residues 309–329, 348–368, 377–397, 407–427, 443–463, and 468–488; these read FMLC…AGYQ, GNFL…STFL, IMLY…VLDA, FVLY…LVSL, VVQV…GAIF, and VGFI…LLYL.

It is found in the membrane. This is an uncharacterized protein from Schizosaccharomyces pombe (strain 972 / ATCC 24843) (Fission yeast).